The primary structure comprises 120 residues: uncharacterized protein (120 aa).

3 helical membrane-spanning segments follow: residues 24 to 44 (ALLG…ALCY), 61 to 81 (IGVV…NLAV), and 86 to 106 (PLGK…GIVV).

It to M.leprae ML1176.

It localises to the cell membrane. This is an uncharacterized protein from Mycobacterium bovis (strain ATCC BAA-935 / AF2122/97).